We begin with the raw amino-acid sequence, 255 residues long: MSLSDLARQIIKEQLDTASRSENNKNTVVYSVETGLKDPTRDGTVAQVSFKFSKPVSQDLLNIRTASILKAVSSSLDLSGDLGALENLIQATAGKKSSVGKKRSTGRVQVNFGDPSDVEDGYSGAVTGASGRFVSNSNMKIILEIVAKEYLIKDMKKAGAPLKFRTGRFANSLKIKDVMLRDSETSKGSPELNVTYNYMTRPYSVFNPAVSTYRRLSLRPYPGARNPQKLIGEAIAKAARDLIHSRYKIKVNQGT.

It is found in the virion. Its function is as follows. Putative role in tail stability. This chain is Tail completion protein p143, found in Escherichia phage T5 (Enterobacteria phage T5).